Here is a 334-residue protein sequence, read N- to C-terminus: o-succinylbenzoate synthase (334 aa).

The active-site Proton donor is the K107. Positions 135, 162, and 185 each coordinate Mg(2+). K209 functions as the Proton acceptor in the catalytic mechanism.

Belongs to the mandelate racemase/muconate lactonizing enzyme family. MenC type 1 subfamily. Requires a divalent metal cation as cofactor.

It catalyses the reaction (1R,6R)-6-hydroxy-2-succinyl-cyclohexa-2,4-diene-1-carboxylate = 2-succinylbenzoate + H2O. It participates in quinol/quinone metabolism; 1,4-dihydroxy-2-naphthoate biosynthesis; 1,4-dihydroxy-2-naphthoate from chorismate: step 4/7. Its pathway is quinol/quinone metabolism; menaquinone biosynthesis. Functionally, converts 2-succinyl-6-hydroxy-2,4-cyclohexadiene-1-carboxylate (SHCHC) to 2-succinylbenzoate (OSB). The polypeptide is o-succinylbenzoate synthase (Mycobacterium leprae (strain TN)).